The following is a 384-amino-acid chain: tRNA 2-selenouridine synthase (384 aa).

The 124-residue stretch at 15–138 (FVAGKPLIDL…MRQYLIGVIE (124 aa)) folds into the Rhodanese domain. C98 (S-selanylcysteine intermediate) is an active-site residue.

The protein belongs to the SelU family. Monomer.

It catalyses the reaction 5-methylaminomethyl-2-thiouridine(34) in tRNA + selenophosphate + (2E)-geranyl diphosphate + H2O + H(+) = 5-methylaminomethyl-2-selenouridine(34) in tRNA + (2E)-thiogeraniol + phosphate + diphosphate. The catalysed reaction is 5-methylaminomethyl-2-thiouridine(34) in tRNA + (2E)-geranyl diphosphate = 5-methylaminomethyl-S-(2E)-geranyl-thiouridine(34) in tRNA + diphosphate. The enzyme catalyses 5-methylaminomethyl-S-(2E)-geranyl-thiouridine(34) in tRNA + selenophosphate + H(+) = 5-methylaminomethyl-2-(Se-phospho)selenouridine(34) in tRNA + (2E)-thiogeraniol. It carries out the reaction 5-methylaminomethyl-2-(Se-phospho)selenouridine(34) in tRNA + H2O = 5-methylaminomethyl-2-selenouridine(34) in tRNA + phosphate. In terms of biological role, involved in the post-transcriptional modification of the uridine at the wobble position (U34) of tRNA(Lys), tRNA(Glu) and tRNA(Gln). Catalyzes the conversion of 2-thiouridine (S2U-RNA) to 2-selenouridine (Se2U-RNA). Acts in a two-step process involving geranylation of 2-thiouridine (S2U) to S-geranyl-2-thiouridine (geS2U) and subsequent selenation of the latter derivative to 2-selenouridine (Se2U) in the tRNA chain. The chain is tRNA 2-selenouridine synthase from Shewanella sp. (strain MR-4).